A 470-amino-acid polypeptide reads, in one-letter code: UDP-N-acetylmuramate--L-alanine ligase (470 aa).

Residue 118 to 124 (GTHGKTT) coordinates ATP.

The protein belongs to the MurCDEF family.

The protein resides in the cytoplasm. The catalysed reaction is UDP-N-acetyl-alpha-D-muramate + L-alanine + ATP = UDP-N-acetyl-alpha-D-muramoyl-L-alanine + ADP + phosphate + H(+). Its pathway is cell wall biogenesis; peptidoglycan biosynthesis. Cell wall formation. The sequence is that of UDP-N-acetylmuramate--L-alanine ligase from Cereibacter sphaeroides (strain ATCC 17025 / ATH 2.4.3) (Rhodobacter sphaeroides).